The primary structure comprises 417 residues: Serine hydroxymethyltransferase (417 aa).

Residues Leu121 and 125-127 (GHL) each bind (6S)-5,6,7,8-tetrahydrofolate. Lys229 carries the post-translational modification N6-(pyridoxal phosphate)lysine. Residue 355 to 357 (SPF) participates in (6S)-5,6,7,8-tetrahydrofolate binding.

This sequence belongs to the SHMT family. In terms of assembly, homodimer. Pyridoxal 5'-phosphate is required as a cofactor.

The protein localises to the cytoplasm. The enzyme catalyses (6R)-5,10-methylene-5,6,7,8-tetrahydrofolate + glycine + H2O = (6S)-5,6,7,8-tetrahydrofolate + L-serine. Its pathway is one-carbon metabolism; tetrahydrofolate interconversion. It participates in amino-acid biosynthesis; glycine biosynthesis; glycine from L-serine: step 1/1. Catalyzes the reversible interconversion of serine and glycine with tetrahydrofolate (THF) serving as the one-carbon carrier. This reaction serves as the major source of one-carbon groups required for the biosynthesis of purines, thymidylate, methionine, and other important biomolecules. Also exhibits THF-independent aldolase activity toward beta-hydroxyamino acids, producing glycine and aldehydes, via a retro-aldol mechanism. The polypeptide is Serine hydroxymethyltransferase (Aeromonas salmonicida (strain A449)).